Consider the following 354-residue polypeptide: UDP-3-O-acylglucosamine N-acyltransferase (354 aa).

H258 acts as the Proton acceptor in catalysis.

The protein belongs to the transferase hexapeptide repeat family. LpxD subfamily. As to quaternary structure, homotrimer.

It carries out the reaction a UDP-3-O-[(3R)-3-hydroxyacyl]-alpha-D-glucosamine + a (3R)-hydroxyacyl-[ACP] = a UDP-2-N,3-O-bis[(3R)-3-hydroxyacyl]-alpha-D-glucosamine + holo-[ACP] + H(+). Its pathway is bacterial outer membrane biogenesis; LPS lipid A biosynthesis. Its function is as follows. Catalyzes the N-acylation of UDP-3-O-acylglucosamine using 3-hydroxyacyl-ACP as the acyl donor. Is involved in the biosynthesis of lipid A, a phosphorylated glycolipid that anchors the lipopolysaccharide to the outer membrane of the cell. The protein is UDP-3-O-acylglucosamine N-acyltransferase of Sinorhizobium medicae (strain WSM419) (Ensifer medicae).